Here is a 393-residue protein sequence, read N- to C-terminus: Bone morphogenetic protein 15 (393 aa).

An N-terminal signal peptide occupies residues 1–25; the sequence is MVLLSILRILLWGLVLFMEHRVQMT. The propeptide occupies 26–268; that stretch reads QVGQPSIAHL…DPSLLLRRAR (243 aa). 2 N-linked (GlcNAc...) asparagine glycosylation sites follow: Asn-86 and Asn-237. 3 cysteine pairs are disulfide-bonded: Cys-292–Cys-358, Cys-321–Cys-390, and Cys-325–Cys-392. An N-linked (GlcNAc...) asparagine glycan is attached at Asn-374.

It belongs to the TGF-beta family. As to quaternary structure, homodimer. But, in contrast to other members of this family, cannot be disulfide-linked.

It is found in the secreted. Its function is as follows. May be involved in follicular development. Oocyte-specific growth/differentiation factor that stimulates folliculogenesis and granulosa cell (GC) growth. This is Bone morphogenetic protein 15 (BMP15) from Ovis aries (Sheep).